The following is a 230-amino-acid chain: uncharacterized protein (230 aa).

The signal sequence occupies residues 1–22 (MNIRSFLLISIFTAISYLVVDG). Over 23–167 (ATPRTFAPSA…YTPYGGVKAL (145 aa)) the chain is Lumenal. Positions 55–90 (SSSSSSSSISTSHDSQPSTSSSSPSSTSTSSSSGTS) are disordered. A helical transmembrane segment spans residues 168–188 (IGILVGVVVGSVFLLAIVMVI). Topologically, residues 189–230 (ARIWGPRLLANKDQNNNNEDLDSNLVSKDSEGTPQITYASNF) are cytoplasmic. The disordered stretch occupies residues 208 to 230 (DLDSNLVSKDSEGTPQITYASNF).

Its subcellular location is the endoplasmic reticulum membrane. This is an uncharacterized protein from Schizosaccharomyces pombe (strain 972 / ATCC 24843) (Fission yeast).